The chain runs to 45 residues: Thymosin beta (45 aa).

Residues 1-45 (MADKPNMTEITSFDKTKLRKTETQEKNPLPTKETIEQERQGESTP) form a disordered region. Composition is skewed to basic and acidic residues over residues 12-25 (SFDK…ETQE) and 33-45 (ETIE…ESTP).

This sequence belongs to the thymosin beta family.

Its subcellular location is the cytoplasm. The protein localises to the cytoskeleton. In terms of biological role, plays an important role in the organization of the cytoskeleton. Binds to and sequesters actin monomers (G actin) and therefore inhibits actin polymerization. The protein is Thymosin beta (tmsb) of Danio rerio (Zebrafish).